The primary structure comprises 1271 residues: MEAVKTFNSELYSLNDYKPPISKAKMTQITKAAIKAIKFYKHVVQSVEKFIQKCKPEYKVPGLYVIDSIVRQSRHQFGQEKDVFAPRFSNNIISTFQNLYRCPGDDKSKIVRVLNLWQKNNVFKSEIIQPLLDMAAGIPPPVVTPVLASTTTAMSNTPGTPVTPVTPANVVQGLPDPWVSQITNTDTLAAVAQILQSPQGQQLQQLIQTLQIQQQKPQPSILQALDAGLVVQLQALTAQLTAAAAAANTLTPLEQGVSFNKKLMDRFDFGEDSEHSEEPKKEIPASQLSHVSESVNNSIFHQIAEQLQQQNLEHLRQQLLEQQQPQKATPQDSQEGTFGSEHSASPSQGSSQQHFLEPEVNLDDSIDIQQQDMDIDEGQDGVEEEVFEQEAKKVAVRSRSRTHSRSRSRSPRKRRSRSRSGSRKRKHRKRSRSRSRERKRKSSRSYSSERRAREREKERQKKGLPPIRSKTLSVCSTTLWVGQVDKKATQQDLTNLFEEFGQIESINMIPPRGCAYVCMVHRQDAFRALQKLSSGSYKIGSKVIKIAWALNKGVKTEYKQFWDVDLGVTYIPWEKVKVDDLEGFAEGGMIDQETVNTEWETVKSSEPVKETVQTTQSPTPVEKETVVTTQAEVFPPPVAMLQIPVAPAVPTVSLVPPAFPVSMPVPPPGFSPIPPPPFLRASFNPSQPPPGFMPPPVPPPVVPPPTIPPVVPTSLVQPSLSMTPETVKDVGFGSLVIPGGSVASNLATSALPAGNVFNAPTKQAEPEEKVPHLIDHQISSGENTRSVIPNDISSNAAILGGQPPNVTSNSGILGVQRPNVSSNSEILGVRPSNVSSSSGIIAAQPPNILNNSGILGIQPPSVSNSSGLLGVLPPNIPNNSGLVGVQPPNVPNTPGLLGTQPPAGPQNLPPLSIPNQRMPTMPMLDIRPGLIPQAPGPRFPLIQPGIPPQRGIPPPSVLDSALHPPPRGPFPPGDIFSQPERPFLAPGRQSVDNVTNPEKRIPLGNDNIQQEGDRDYRFPPIETRESISRPPPVDVRDVVGRPIDPREGPGRPPLDGRDHFGRPPVDIRENLVRPGIDHLGRRDHFGFNPEKPWGHRGDFDEREHRVLPVYGGPKGLHEERGRFRSGNYRFDPRSGPWNRGFGQEVHRDFDDRRRPWERQRDRDDRDFDFCREMNGNRLGRDRIQNTWVPPPHARVFDYFEGATSQRKGDNVPQVNGENTERHAQPPPIPVQNDPELYEKLTSSNEINKEKSDTVADIESEPVVESTETEGT.

The CID domain occupies 1–139 (MEAVKTFNSE…PLLDMAAGIP (139 aa)). Thr-6 carries the phosphothreonine modification. Residue Lys-18 forms a Glycyl lysine isopeptide (Lys-Gly) (interchain with G-Cter in SUMO1) linkage. The segment covering 270–283 (GEDSEHSEEPKKEI) has biased composition (basic and acidic residues). Disordered stretches follow at residues 270–289 (GEDSEHSEEPKKEIPASQLS), 322–354 (QQQPQKATPQDSQEGTFGSEHSASPSQGSSQQH), and 384–468 (EEVF…PPIR). Ser-273 is subject to Phosphoserine. Positions 327–354 (KATPQDSQEGTFGSEHSASPSQGSSQQH) are enriched in polar residues. Residues 394–443 (VAVRSRSRTHSRSRSRSPRKRRSRSRSGSRKRKHRKRSRSRSRERKRKSS) are compositionally biased toward basic residues. The segment covering 447 to 461 (SSERRAREREKERQK) has biased composition (basic and acidic residues). Positions 477-551 (TTLWVGQVDK…KVIKIAWALN (75 aa)) constitute an RRM domain. A Phosphothreonine modification is found at Thr-615. 2 positions are modified to phosphoserine: Ser-617 and Ser-779. Residues 899–918 (TQPPAGPQNLPPLSIPNQRM) are disordered. The segment covering 902 to 912 (PAGPQNLPPLS) has biased composition (pro residues). An asymmetric dimethylarginine mark is found at Arg-917, Arg-927, and Arg-938. Composition is skewed to pro residues over residues 945 to 956 (GIPPQRGIPPPS) and 963 to 972 (HPPPRGPFPP). A disordered region spans residues 945-1064 (GIPPQRGIPP…DGRDHFGRPP (120 aa)). 2 stretches are compositionally biased toward basic and acidic residues: residues 1011-1027 (EGDRDYRFPPIETRESI) and 1034-1064 (DVRDVVGRPIDPREGPGRPPLDGRDHFGRPP). At Arg-1073 the chain carries Asymmetric dimethylarginine. Residues 1198–1271 (YFEGATSQRK…VVESTETEGT (74 aa)) form a disordered region. Positions 1255–1271 (ADIESEPVVESTETEGT) are enriched in acidic residues.

As to quaternary structure, interacts with POLR2A; via C-terminal heptapeptide repeat domain (CTD) phosphorylated at 'Ser-2' and 'Ser-5'. Identified in a complex with CDC5L and other spliceosomal proteins.

It localises to the nucleus. The protein resides in the nucleus matrix. Functionally, anti-terminator protein required to prevent early mRNA termination during transcription. Together with SCAF4, acts by suppressing the use of early, alternative poly(A) sites, thereby preventing the accumulation of non-functional truncated proteins. Mechanistically, associates with the phosphorylated C-terminal heptapeptide repeat domain (CTD) of the largest RNA polymerase II subunit (POLR2A), and subsequently binds nascent RNA upstream of early polyadenylation sites to prevent premature mRNA transcript cleavage and polyadenylation. Independently of SCAF4, also acts as a positive regulator of transcript elongation. The protein is SR-related and CTD-associated factor 8 of Homo sapiens (Human).